The chain runs to 496 residues: Probable CtpA-like serine protease (496 aa).

Basic and acidic residues predominate over residues 1–16 (MDDKQHTSSSDDERAE). The interval 1-27 (MDDKQHTSSSDDERAEIATSNQDQQTN) is disordered. Over residues 18-27 (ATSNQDQQTN) the composition is skewed to polar residues. Residues 39 to 59 (FISILIGTILITAVITVVAYI) form a helical membrane-spanning segment. The region spanning 124-206 (TKSFNEGVSG…TEVTLTVQRG (83 aa)) is the PDZ domain. Catalysis depends on charge relay system residues Ser329, Asp340, and Lys354.

This sequence belongs to the peptidase S41A family.

It is found in the cell membrane. In Staphylococcus aureus (strain bovine RF122 / ET3-1), this protein is Probable CtpA-like serine protease.